The following is a 258-amino-acid chain: Global transcriptional regulator CodY (258 aa).

The interval 1 to 156 (MSSLLEKTRQ…SATIIGLEIL (156 aa)) is GAF domain. Positions 204–223 (ASKIADKVGITRSVIVNALR) form a DNA-binding region, H-T-H motif.

Belongs to the CodY family.

The protein resides in the cytoplasm. In terms of biological role, DNA-binding global transcriptional regulator which is involved in the adaptive response to starvation and acts by directly or indirectly controlling the expression of numerous genes in response to nutrient availability. During rapid exponential growth, CodY is highly active and represses genes whose products allow adaptation to nutrient depletion. The protein is Global transcriptional regulator CodY of Clostridium tetani (strain Massachusetts / E88).